A 469-amino-acid polypeptide reads, in one-letter code: Zinc transporter SLC39A7 (469 aa).

Residues 5–25 (LGAPHWVAVGLLTWAALGLLV) traverse the membrane as a helical segment. Basic and acidic residues-rich tracts occupy residues 43-56 (HGHSHRRSHEDFHH) and 66-114 (HTHE…EHSH). Positions 43-122 (HGHSHRRSHE…SHGGYGESGA (80 aa)) are disordered. At histidine 66 the chain carries Pros-methylhistidine. 3 helical membrane passes run 138–158 (ALGATVLISAAPFFVLFLIPV), 169–189 (LQILLSFASGGLLGDAFLHLI), and 214–234 (GPILSVGLWVLSGIVAFLVVE). The segment covering 242 to 255 (GGHGHSHGHGHTHG) has biased composition (basic residues). The interval 242–313 (GGHGHSHGHG…QNSEEEKTGS (72 aa)) is disordered. Over residues 256–266 (HTQGSHGHGTQ) the composition is skewed to low complexity. Phosphoserine is present on residues serine 275 and serine 276. The segment covering 295 to 313 (RLKDGPLRPQNSEEEKTGS) has biased composition (basic and acidic residues). The next 3 membrane-spanning stretches (helical) occupy residues 386–406 (LTAIGALAGTACALLTEGGAV), 417–437 (GWVLPFTAGGFIYVATVSVLP), and 448–468 (SLLEVLGLLGGVVMMVLIAHL).

It belongs to the ZIP transporter (TC 2.A.5) family. KE4/Catsup subfamily. As to quaternary structure, homodimer. In terms of processing, methylation at some His residue by METTL9 leads to reduced zinc-binding. Rapidly phosphorylated by CK2 following Zn(2+) treatment. This phosphorylation is required for efficient cytosolic Zn(2+) release.

It is found in the endoplasmic reticulum membrane. The protein localises to the golgi apparatus. The protein resides in the cis-Golgi network membrane. It carries out the reaction Zn(2+)(in) = Zn(2+)(out). Functionally, transports Zn(2+) from the endoplasmic reticulum (ER)/Golgi apparatus to the cytosol, playing an essential role in the regulation of cytosolic zinc levels. Acts as a gatekeeper of zinc release from intracellular stores, requiring post-translational activation by phosphorylation, resulting in activation of multiple downstream pathways leading to cell growth and proliferation. Has an essential role in B cell development and is required for proper B cell receptor signaling. Plays an important role in maintaining intestinal epithelial homeostasis and skin dermis development by regulating ER function. Controls cell signaling pathways involved in glucose metabolism in skeletal muscle. Has a protective role against ER stress in different biological contexts. Mediates Zn(2+)-induced ferroptosis. The chain is Zinc transporter SLC39A7 from Canis lupus familiaris (Dog).